A 358-amino-acid polypeptide reads, in one-letter code: MATAVRSGRLSSWQSFCQWVTDTNNRIYIGWFGVLMIPCLLAATTCFIVAFIAAPPVDIDGIREPVAGSLLYGNNIISGAVVPSSNAIGLHFYPIWDAASLDEWLYNGGTYQLVVFHFLIGISAYMGRQWELSYRLGMRPWICVAYSAPLSAAMAVFLVYPFGQGSFSDGMPLGISGTFNFMLVFQAEHNILMHPFHMLGVAGVFGGSLFSAMHGSLVTSSLVRETTENESHNYGYKFGQEEETYNIVAAHGYFGRLIFQYASFNNSRSLHFLLGAWPVVGIWFTSMGVSTMAFNLNGFNFNQSILDSQGRVLNTWADMVNRAGLGMEVMHERNAHNFPLDLATVESTPVALQAPAIG.

The next 3 membrane-spanning stretches (helical) occupy residues 28–45 (YIGW…AATT), 117–132 (HFLI…QWEL), and 141–155 (WICV…AAMA). H117 contacts chlorophyll a. Y125 is a binding site for pheophytin a. 2 residues coordinate [CaMn4O5] cluster: D169 and E188. A helical membrane pass occupies residues 196-217 (FHMLGVAGVFGGSLFSAMHGSL). Chlorophyll a is bound at residue H197. A quinone-binding positions include H214 and 263–264 (SF). Position 214 (H214) interacts with Fe cation. Position 271 (H271) interacts with Fe cation. The chain crosses the membrane as a helical span at residues 273–287 (LLGAWPVVGIWFTSM). The [CaMn4O5] cluster site is built by H331, E332, D341, and A343. A propeptide spanning residues 344–358 (TVESTPVALQAPAIG) is cleaved from the precursor.

This sequence belongs to the reaction center PufL/M/PsbA/D family. In terms of assembly, PSII is composed of 1 copy each of membrane proteins PsbA, PsbB, PsbC, PsbD, PsbE, PsbF, PsbH, PsbI, PsbJ, PsbK, PsbL, PsbM, PsbT, PsbX, PsbY, PsbZ, Psb30/Ycf12, peripheral proteins PsbO, CyanoQ (PsbQ), PsbU, PsbV and a large number of cofactors. It forms dimeric complexes. The D1/D2 heterodimer binds P680, chlorophylls that are the primary electron donor of PSII, and subsequent electron acceptors. It shares a non-heme iron and each subunit binds pheophytin, quinone, additional chlorophylls, carotenoids and lipids. D1 provides most of the ligands for the Mn4-Ca-O5 cluster of the oxygen-evolving complex (OEC). There is also a Cl(-1) ion associated with D1 and D2, which is required for oxygen evolution. The PSII complex binds additional chlorophylls, carotenoids and specific lipids. is required as a cofactor. In terms of processing, tyr-160 forms a radical intermediate that is referred to as redox-active TyrZ, YZ or Y-Z. Post-translationally, C-terminally processed by CtpA; processing is essential to allow assembly of the oxygen-evolving complex and thus photosynthetic growth.

Its subcellular location is the cellular thylakoid membrane. It catalyses the reaction 2 a plastoquinone + 4 hnu + 2 H2O = 2 a plastoquinol + O2. In terms of biological role, photosystem II (PSII) is a light-driven water:plastoquinone oxidoreductase that uses light energy to abstract electrons from H(2)O, generating O(2) and a proton gradient subsequently used for ATP formation. It consists of a core antenna complex that captures photons, and an electron transfer chain that converts photonic excitation into a charge separation. The D1/D2 (PsbA/PsbD) reaction center heterodimer binds P680, the primary electron donor of PSII as well as several subsequent electron acceptors. The sequence is that of Photosystem II protein D1 3 from Synechococcus sp. (strain CC9311).